The sequence spans 196 residues: Glycerol-3-phosphate acyltransferase (196 aa).

5 helical membrane passes run 2–22 (GWWL…SYLI), 51–71 (VVGG…VFIA), 80–100 (LVSL…FMKF), 112–132 (IIFC…LVIV), and 137–156 (YASL…GYLF).

Belongs to the PlsY family. Probably interacts with PlsX.

The protein resides in the cell inner membrane. The enzyme catalyses an acyl phosphate + sn-glycerol 3-phosphate = a 1-acyl-sn-glycero-3-phosphate + phosphate. It functions in the pathway lipid metabolism; phospholipid metabolism. Its function is as follows. Catalyzes the transfer of an acyl group from acyl-phosphate (acyl-PO(4)) to glycerol-3-phosphate (G3P) to form lysophosphatidic acid (LPA). This enzyme utilizes acyl-phosphate as fatty acyl donor, but not acyl-CoA or acyl-ACP. The chain is Glycerol-3-phosphate acyltransferase from Thermotoga petrophila (strain ATCC BAA-488 / DSM 13995 / JCM 10881 / RKU-1).